A 488-amino-acid polypeptide reads, in one-letter code: GTPase Der (488 aa).

EngA-type G domains lie at 3–166 and 199–372; these read PVVA…AEAM and IKLA…DSAT. Residues 9–16, 56–60, 118–121, 205–212, 252–256, and 317–320 contribute to the GTP site; these read GRPNVGKS, DTGGI, NKVD, GKPNVGKS, DTAGV, and NKWD. The 85-residue stretch at 373-457 folds into the KH-like domain; sequence RRVSTSMLTR…PIQLRFQEGD (85 aa). The interval 469–488 is disordered; the sequence is MSQERRRKRALSHIKDRKTK. Residues 473–488 are compositionally biased toward basic residues; that stretch reads RRRKRALSHIKDRKTK.

This sequence belongs to the TRAFAC class TrmE-Era-EngA-EngB-Septin-like GTPase superfamily. EngA (Der) GTPase family. Associates with the 50S ribosomal subunit.

Functionally, GTPase that plays an essential role in the late steps of ribosome biogenesis. The sequence is that of GTPase Der from Shewanella putrefaciens (strain CN-32 / ATCC BAA-453).